Consider the following 488-residue polypeptide: Bifunctional protein GlmU (488 aa).

Positions 1-237 are pyrophosphorylase; the sequence is MPRTRTPLAA…VEEASGVNDR (237 aa). Residues 13–16, lysine 27, glutamine 82, 87–88, 110–112, glycine 149, glutamate 164, asparagine 179, and asparagine 235 each bind UDP-N-acetyl-alpha-D-glucosamine; these read LAAG, GT, and SGD. Mg(2+) is bound at residue aspartate 112. Asparagine 235 lines the Mg(2+) pocket. Residues 238–258 are linker; it reads VELSRANRVMVGRLAEAFMRA. The tract at residues 259-488 is N-acetyltransferase; that stretch reads GVTIEDPARF…KGRPAARRAS (230 aa). UDP-N-acetyl-alpha-D-glucosamine-binding residues include arginine 341 and lysine 359. Histidine 371 serves as the catalytic Proton acceptor. UDP-N-acetyl-alpha-D-glucosamine contacts are provided by tyrosine 374 and asparagine 385. Residues alanine 388, 394–395, serine 413, alanine 431, and arginine 448 each bind acetyl-CoA; that span reads NY. The segment at 459–488 is disordered; that stretch reads AQRQAEKQMKGTATGPASARKGRPAARRAS. The span at 478-488 shows a compositional bias: basic residues; the sequence is RKGRPAARRAS.

The protein in the N-terminal section; belongs to the N-acetylglucosamine-1-phosphate uridyltransferase family. It in the C-terminal section; belongs to the transferase hexapeptide repeat family. As to quaternary structure, homotrimer. Mg(2+) is required as a cofactor.

It localises to the cytoplasm. The enzyme catalyses alpha-D-glucosamine 1-phosphate + acetyl-CoA = N-acetyl-alpha-D-glucosamine 1-phosphate + CoA + H(+). The catalysed reaction is N-acetyl-alpha-D-glucosamine 1-phosphate + UTP + H(+) = UDP-N-acetyl-alpha-D-glucosamine + diphosphate. It functions in the pathway nucleotide-sugar biosynthesis; UDP-N-acetyl-alpha-D-glucosamine biosynthesis; N-acetyl-alpha-D-glucosamine 1-phosphate from alpha-D-glucosamine 6-phosphate (route II): step 2/2. It participates in nucleotide-sugar biosynthesis; UDP-N-acetyl-alpha-D-glucosamine biosynthesis; UDP-N-acetyl-alpha-D-glucosamine from N-acetyl-alpha-D-glucosamine 1-phosphate: step 1/1. The protein operates within bacterial outer membrane biogenesis; LPS lipid A biosynthesis. Catalyzes the last two sequential reactions in the de novo biosynthetic pathway for UDP-N-acetylglucosamine (UDP-GlcNAc). The C-terminal domain catalyzes the transfer of acetyl group from acetyl coenzyme A to glucosamine-1-phosphate (GlcN-1-P) to produce N-acetylglucosamine-1-phosphate (GlcNAc-1-P), which is converted into UDP-GlcNAc by the transfer of uridine 5-monophosphate (from uridine 5-triphosphate), a reaction catalyzed by the N-terminal domain. This chain is Bifunctional protein GlmU, found in Anaeromyxobacter sp. (strain K).